The primary structure comprises 793 residues: MNEKTLKILEFNKIIDKLVSLATSSLGKELAEKLVPDTDLNRVERAQKETSDAVAFIARRGTPPMGGIHDIRDSLKRVEIGAILNPGELLKTADVLRAVRNLKSYASNDRIKTDEDNIVSELIGCLESNKRIEDRIYMSILSEDEIADNASPTLANIRRQIRNAQESIKDKLNDIIRSSRYQKYIQEPIVTLRGDRYVIPVKQEYRTEIPGLIHDSSASGATIFIEPMAVVEANNHIRELKIKEQAEIEKILGELTGEIRGIVDSLKSNVSILGRLDFIFAKARLSLDYNCVCPVLNDEHKILIKKGRHPLLDKKTVVPIDFWIGEDFNTLVVTGPNTGGKTVTLKTVGLFTLMTQAGLHIPANEGTKMSIFKKVYADIGDEQSIEQSLSTFSSHMKNIVGILKDVDEDSLVLFDELGAGTDPTEGAALAMSILEYLRNKGSTTVATTHYSQLKAYAVTTKFVENACCEFNVETLRPTYRLLIGVPGKSNAFAISKRLGLFDDIIEKAKEFLTQDDIKFEDMLMSIEKNLNQSENEKMKAESYRLEAEKLKKELEEQKRKLAENRERLIQEARAEARKILLEARKEAEEIISKMRRLEQEVHNAQRQKEAEELRLKLKRKVDSIEETLELPLAPKNALVKPPENLKPGDSVLIVNLDQKGTVITPPDKDGEVVVQAGIMKINVHISNLKLVDEQKIVLNNSGIGKIGMSKAKSISTEIDVRGYNLEEAIESVDKYLDDAYLSGLTEVSIIHGKGTGVLRSGIQKFLKSDSRVKSFRLGKYGEGESGVTIVELR.

Residue 335–342 (GPNTGGKT) participates in ATP binding. Positions 718–793 (IDVRGYNLEE…ESGVTIVELR (76 aa)) constitute a Smr domain.

This sequence belongs to the DNA mismatch repair MutS family. MutS2 subfamily. Homodimer. Binds to stalled ribosomes, contacting rRNA.

Endonuclease that is involved in the suppression of homologous recombination and thus may have a key role in the control of bacterial genetic diversity. In terms of biological role, acts as a ribosome collision sensor, splitting the ribosome into its 2 subunits. Detects stalled/collided 70S ribosomes which it binds and splits by an ATP-hydrolysis driven conformational change. Acts upstream of the ribosome quality control system (RQC), a ribosome-associated complex that mediates the extraction of incompletely synthesized nascent chains from stalled ribosomes and their subsequent degradation. Probably generates substrates for RQC. The sequence is that of Endonuclease MutS2 from Acetivibrio thermocellus (strain ATCC 27405 / DSM 1237 / JCM 9322 / NBRC 103400 / NCIMB 10682 / NRRL B-4536 / VPI 7372) (Clostridium thermocellum).